Reading from the N-terminus, the 305-residue chain is UDP-3-O-acyl-N-acetylglucosamine deacetylase (305 aa).

Residues H78, H237, and D241 each coordinate Zn(2+). H264 functions as the Proton donor in the catalytic mechanism.

The protein belongs to the LpxC family. The cofactor is Zn(2+).

It carries out the reaction a UDP-3-O-[(3R)-3-hydroxyacyl]-N-acetyl-alpha-D-glucosamine + H2O = a UDP-3-O-[(3R)-3-hydroxyacyl]-alpha-D-glucosamine + acetate. It participates in glycolipid biosynthesis; lipid IV(A) biosynthesis; lipid IV(A) from (3R)-3-hydroxytetradecanoyl-[acyl-carrier-protein] and UDP-N-acetyl-alpha-D-glucosamine: step 2/6. Functionally, catalyzes the hydrolysis of UDP-3-O-myristoyl-N-acetylglucosamine to form UDP-3-O-myristoylglucosamine and acetate, the committed step in lipid A biosynthesis. In Dechloromonas aromatica (strain RCB), this protein is UDP-3-O-acyl-N-acetylglucosamine deacetylase.